The sequence spans 430 residues: MGKPDIYNSSANVEKSPYYKAMQHRAPNVLTAVDKKAHGMRRRILSQGLSDSSTRAFGNTIKKHIERLCQKIEGHSDPNTQWSESYDMARWFSYLTFDIMADVVFGQPYNLLGNSEYRYVVDSIEGSNIRTGVLIQAPEAYTWRLDKRLFPASIRHRNTFVKFISSLVQERLTTKPLERDDIISHLLTAKDSETGQGFTKNEVAAESSTLIVAGTDTSSTALAATLFYLTQYPNMYRRAVAEVRSSFAKSQDVKLGRALNECVFTRACIEESMRLSPPAASALWRRVQVGGQTVDGHAIQAGCNIGVCIYAIHHNELYYPDPFVFNPDRWLQNDKQAQSAFSPFSVGPRSCIGKGFAMAELMLAVATILVKFDIRRAPGDQGCIGQGHLEGEDGRRMVDEYQLHDHVTAFKQGPVLQFRRRDTVVQSEAE.

Cys-351 provides a ligand contact to heme.

The protein belongs to the cytochrome P450 family. The cofactor is heme.

The protein operates within mycotoxin biosynthesis. Its function is as follows. Cytochrome P450 monooxygenase; part of the gene cluster that mediates the biosynthesis of gramillins A and B, bicyclic lipopeptides that induce cell death in maize leaves but not in wheat leaves. The nonribosomal peptide synthetase GRA1 incorporates respectively a glutamic adic (Glu), a leucine (Leu), a serine (Ser), a hydroxyglutamine (HOGln), a 2-amino decanoic acid, and 2 cysteins (CysB and CysA). The biosynthesis of 2-amino decanoic acid incorporated in gramillins could be initiated by a fatty acid synthase composed of the alpha and beta subunits FGSG_00036 and FGSG_11656. The cytochrome P450 monooxygenase FGSG_15680 could hydroxylate the fatty acid chain. Subsequent oxidation to the ketone by the oxidoreductase FGSG_00048 and transamination by aminotransferase FGSG_00049 could form 2-amino-decanoic acid. On the other hand, FGSG_15680 could also be responsible for the HO-modified glutamine at the gamma-position. Whether hydroxylation occurs on the fully assembled product or on the Gln residue prior to assembly into the gramillins requires further proof. The thioredoxin FGSG_00043 could also be required for the disulfide-bond formation between CysA and CysB. The specific involvement of the remaining proteins from the cluster is more difficult to discern, but could have broader regulatory (FGSG_00040 and FGSG_11657) or enzymatic functions (FGSG_00044 and FGSG_00045). The final C-domain of GRA1 does not possess the expected sequence of a termination CT domain, often implicated in macrocyclization and release of a cyclopeptidein fungal NRPs; and the thioesterase FGSG_00047 may act in concert with the terminal C-domain of GRA1 to catalyze the formation of the macrocyclic anhydride and release of the products. This Gibberella zeae (strain ATCC MYA-4620 / CBS 123657 / FGSC 9075 / NRRL 31084 / PH-1) (Wheat head blight fungus) protein is Cytochrome P450 monooxygenase FGSG_15680.